The sequence spans 297 residues: Band 7 protein AAEL010189 (297 aa).

Residues 1 to 13 show a composition bias toward polar residues; sequence MGVVESITNSTKP. Residues 1–30 form a disordered region; it reads MGVVESITNSTKPGVTKKSSPEAEDDSNGE. Residues 37–57 form a helical membrane-spanning segment; the sequence is ILIFLSWVLVVLTMPFSLLVC.

This sequence belongs to the band 7/mec-2 family.

The protein localises to the membrane. This chain is Band 7 protein AAEL010189, found in Aedes aegypti (Yellowfever mosquito).